The following is a 361-amino-acid chain: Ribosomal RNA large subunit methyltransferase M (361 aa).

Residues Ser-193, Cys-226–Gly-229, Asp-245, Asp-265, and Asp-283 each bind S-adenosyl-L-methionine. The active-site Proton acceptor is Lys-312.

It belongs to the class I-like SAM-binding methyltransferase superfamily. RNA methyltransferase RlmE family. RlmM subfamily. Monomer.

It is found in the cytoplasm. The catalysed reaction is cytidine(2498) in 23S rRNA + S-adenosyl-L-methionine = 2'-O-methylcytidine(2498) in 23S rRNA + S-adenosyl-L-homocysteine + H(+). Catalyzes the 2'-O-methylation at nucleotide C2498 in 23S rRNA. This Histophilus somni (strain 2336) (Haemophilus somnus) protein is Ribosomal RNA large subunit methyltransferase M.